The primary structure comprises 339 residues: tRNA dimethylallyltransferase (339 aa).

ATP is bound at residue 36–43 (GPTGSGKT). 38-43 (TGSGKT) is a substrate binding site. An interaction with substrate tRNA region spans residues 61–64 (DSMQ).

This sequence belongs to the IPP transferase family. As to quaternary structure, monomer. It depends on Mg(2+) as a cofactor.

It carries out the reaction adenosine(37) in tRNA + dimethylallyl diphosphate = N(6)-dimethylallyladenosine(37) in tRNA + diphosphate. Catalyzes the transfer of a dimethylallyl group onto the adenine at position 37 in tRNAs that read codons beginning with uridine, leading to the formation of N6-(dimethylallyl)adenosine (i(6)A). This Chlamydia trachomatis serovar A (strain ATCC VR-571B / DSM 19440 / HAR-13) protein is tRNA dimethylallyltransferase.